Consider the following 419-residue polypeptide: Histidine--tRNA ligase (419 aa).

This sequence belongs to the class-II aminoacyl-tRNA synthetase family. Homodimer.

It localises to the cytoplasm. The enzyme catalyses tRNA(His) + L-histidine + ATP = L-histidyl-tRNA(His) + AMP + diphosphate + H(+). In Thermosipho melanesiensis (strain DSM 12029 / CIP 104789 / BI429), this protein is Histidine--tRNA ligase.